The following is a 122-amino-acid chain: MIQRGRATLLVALLLLAQLRPESSQWSPAAAAATGVQDPNLRWSPGVRNQGGGVRALLLLLAERFPRRAGSEPAGERQRRDDPPLSIDLTFHLLRTLLELARTQSQRERAEQNRIIFDSVGK.

The N-terminal stretch at 1–25 is a signal peptide; it reads MIQRGRATLLVALLLLAQLRPESSQ. The propeptide occupies 26–80; the sequence is WSPAAAAATGVQDPNLRWSPGVRNQGGGVRALLLLLAERFPRRAGSEPAGERQRR. Valine amide is present on valine 120.

It belongs to the sauvagine/corticotropin-releasing factor/urotensin I family. Interacts with CRHR1 and CRHR2 (via their N-terminal extracellular domain). In terms of tissue distribution, in the organ of Corti, detected in the inner hair cell region (at protein level). Expressed in skin (at protein level).

Its subcellular location is the secreted. Functionally, acts in vitro to stimulate the secretion of adrenocorticotropic hormone (ACTH). Binds with high affinity to CRF receptor types 1, 2-alpha, and 2-beta. Plays a role in the establishment of normal hearing thresholds. Reduces food intake and regulates ghrelin levels in gastric body and plasma. In Mus musculus (Mouse), this protein is Urocortin (Ucn).